We begin with the raw amino-acid sequence, 382 residues long: G-box-binding factor 3 (382 aa).

Over residues 1 to 16 (MGNSSEEPKPPTKSDK) the composition is skewed to basic and acidic residues. Disordered stretches follow at residues 1 to 26 (MGNSSEEPKPPTKSDKPSSPPVDQTN), 97 to 221 (MGSL…GVKL), and 257 to 285 (ERELKRERRKQSNRESARRSRLRKQAETE). The span at 111-130 (TPGTLLSIDTPTKSTGNTDN) shows a compositional bias: polar residues. Basic and acidic residues predominate over residues 155 to 165 (ADEHKRSRNSS). Over residues 166-181 (ETDGSTDGSDGNTTGA) the composition is skewed to low complexity. Residues 182–199 (DEPKLKRSREGTPTKDGK) show a composition bias toward basic and acidic residues. Residues 202 to 216 (VQASSFHSVSPSSGD) are compositionally biased toward polar residues. The 64-residue stretch at 259-322 (ELKRERRKQS…DKLRGANATL (64 aa)) folds into the bZIP domain. The interval 261 to 280 (KRERRKQSNRESARRSRLRK) is basic motif. The leucine-zipper stretch occupies residues 287–322 (LARKVEALTAENMALRSELNQLNEKSDKLRGANATL). The disordered stretch occupies residues 329 to 382 (SEPEKRVPANMLSRVKNSGAGDKNKNQGDNDSNSTSKLHQLLDTKPRAKAVAAG). Residues 357 to 366 (DNDSNSTSKL) are compositionally biased toward polar residues.

It belongs to the bZIP family. DNA-binding heterodimer. Interacts with GBF4. Interacts with BZIP16 and BZIP68. As to expression, present only in dark grown leaves and roots.

It localises to the nucleus. Its function is as follows. Binds to the G-box motif (5'-CCACGTGG-3') of the rbcS-1A gene promoter. G-box and G-box-like motifs are cis-acting elements defined in promoters of certain plant genes which are regulated by such diverse stimuli as light-induction or hormone control. In Arabidopsis thaliana (Mouse-ear cress), this protein is G-box-binding factor 3 (GBF3).